An 80-amino-acid chain; its full sequence is Small ribosomal subunit protein bS18 (80 aa).

This sequence belongs to the bacterial ribosomal protein bS18 family. Part of the 30S ribosomal subunit. Forms a tight heterodimer with protein bS6.

Binds as a heterodimer with protein bS6 to the central domain of the 16S rRNA, where it helps stabilize the platform of the 30S subunit. This chain is Small ribosomal subunit protein bS18, found in Clostridium botulinum (strain 657 / Type Ba4).